Reading from the N-terminus, the 89-residue chain is MAHKKAGGSSRNGRDSDGRRLGVKKFGGQAVVSGNIIVRQRGTKWHPGTNVGMGKDHTLFALVEGRVEFRTKANDRTYVSVVPALEAAE.

A disordered region spans residues 1 to 24 (MAHKKAGGSSRNGRDSDGRRLGVK).

It belongs to the bacterial ribosomal protein bL27 family.

The protein is Large ribosomal subunit protein bL27 of Azorhizobium caulinodans (strain ATCC 43989 / DSM 5975 / JCM 20966 / LMG 6465 / NBRC 14845 / NCIMB 13405 / ORS 571).